The primary structure comprises 221 residues: High frequency lysogenization protein HflD homolog (221 aa).

Belongs to the HflD family.

The protein localises to the cytoplasm. The protein resides in the cell inner membrane. This chain is High frequency lysogenization protein HflD homolog, found in Acidithiobacillus ferrooxidans (strain ATCC 23270 / DSM 14882 / CIP 104768 / NCIMB 8455) (Ferrobacillus ferrooxidans (strain ATCC 23270)).